Consider the following 306-residue polypeptide: Protein YIPF1 (306 aa).

Over 1 to 119 (MAAVDDLQFE…VRLYIRSNPD (119 aa)) the chain is Cytoplasmic. Residues 33-59 (PSVSFKHQPRPPGSLGREEDEELLGTN) are disordered. Over residues 50-59 (EEDEELLGTN) the composition is skewed to acidic residues. A helical membrane pass occupies residues 120–140 (LYGPFWICATLVFAIAISGNL). The Lumenal portion of the chain corresponds to 141–162 (SNFLIHLGEKTYHYVPEFQKVS). Residues 163-183 (IAATVIYAYAWLVPLALWGFL) traverse the membrane as a helical segment. Over 184–200 (LWRNSKVMNIVSYSFLE) the chain is Cytoplasmic. Residues 201-221 (IVCVYGYSLFIYIPTAVLWII) traverse the membrane as a helical segment. The Lumenal portion of the chain corresponds to 222-227 (PQRVIR). Residues 228 to 248 (WVLVTIALGISGSVLAMTFWP) traverse the membrane as a helical segment. The Cytoplasmic segment spans residues 249–256 (AVREDNRR). The chain crosses the membrane as a helical span at residues 257–277 (VALATIVTIMLLHVLLSVGCL). Residues 278–306 (AYFFDAPEMDHLPAAITTPNQTVAAAKSS) are Lumenal-facing. Residue N297 is glycosylated (N-linked (GlcNAc...) asparagine).

The protein belongs to the YIP1 family. As to quaternary structure, interacts with YIPF6; this interaction may stabilize YIPF1. May also form a ternary complex with YIPF2 and YIPF6.

Its subcellular location is the golgi apparatus. The protein localises to the cis-Golgi network membrane. The protein resides in the trans-Golgi network membrane. It localises to the late endosome membrane. This is Protein YIPF1 (Yipf1) from Rattus norvegicus (Rat).